A 133-amino-acid polypeptide reads, in one-letter code: DUF35 domain-containing scaffold protein (133 aa).

The Zn(2+) site is built by Cys23, Cys26, Cys37, and Cys40.

This sequence belongs to the scaffold protein DUF35 family. As to quaternary structure, interacts with acetoacetyl-CoA thiolase and HMG-CoA synthase (HMGCS) that catalyzes the first and second step in the mevalonate pathway, respectively.

In terms of biological role, functions as a scaffold to connect the acetoacetyl-CoA thiolase and HMG-CoA synthase (HMGCS) dimers in the channeling thiolase/HMGCS complex, which allows for efficient coupling of the endergonic thiolase reaction with the exergonic HMGCS reaction. This chain is DUF35 domain-containing scaffold protein, found in Methanothermobacter thermautotrophicus (strain ATCC 29096 / DSM 1053 / JCM 10044 / NBRC 100330 / Delta H) (Methanobacterium thermoautotrophicum).